Here is a 101-residue protein sequence, read N- to C-terminus: Large ribosomal subunit protein eL21 (101 aa).

A compositionally biased stretch (basic residues) spans 1–18 (MVKHSRGYRTRSRSLLRK). The segment at 1–23 (MVKHSRGYRTRSRSLLRKSPRER) is disordered.

Belongs to the eukaryotic ribosomal protein eL21 family.

The sequence is that of Large ribosomal subunit protein eL21 from Saccharolobus islandicus (strain Y.N.15.51 / Yellowstone #2) (Sulfolobus islandicus).